Here is a 162-residue protein sequence, read N- to C-terminus: MERSTRAWMSIVVVQAMGSVWMCYAKQNSASHYTSTLPALSRAHALPLALLCILRIVLIFDFRNFSIHIAHILLSILTAIHTMTEVFFYQSMSYGIVTVTEVTLNSFSVVVMLTFLLSPSFKNEQEGKEKRARKVTAKHYMEGEMLTPEDDDELVQAYKKWK.

4 helical membrane-spanning segments follow: residues 7–25 (AWMS…MCYA), 40–60 (LSRA…VLIF), 69–89 (IAHI…VFFY), and 96–116 (IVTV…LTFL).

Belongs to the ERG28 family. In terms of tissue distribution, expressed in tissues including muscles, intestine and neurons.

It localises to the endoplasmic reticulum membrane. Its subcellular location is the cell projection. It is found in the dendrite. Its function is as follows. Promotes the translocation of slo-1 potassium ion channels from the endoplasmic reticulum to its final destination at the plasma membrane, probably by shielding from premature proteasomal degradation in the endoplasmic reticulum. Maintains the levels of slo-1 potassium ion channel at the presynaptic neurons. The protein is Probable ergosterol biosynthetic protein 28 homolog of Caenorhabditis elegans.